A 260-amino-acid polypeptide reads, in one-letter code: Carbonic anhydrase 2 (260 aa).

Ser-2 carries the post-translational modification N-acetylserine. Phosphoserine is present on Ser-2. Residues 3-259 (HHWGYGEHNG…LKNRQVRVFP (257 aa)) enclose the Alpha-carbonic anhydrase domain. The Proton donor/acceptor role is filled by His-64. Zn(2+)-binding residues include His-94, His-96, and His-119. Phosphoserine occurs at positions 165 and 172. 198 to 199 (TN) provides a ligand contact to substrate.

It belongs to the alpha-carbonic anhydrase family. As to quaternary structure, interacts with SLC4A4 and SLC26A6. Interaction with SLC4A7 regulates SLC4A7 transporter activity. The cofactor is Zn(2+).

The protein resides in the cytoplasm. It localises to the cell membrane. It catalyses the reaction hydrogencarbonate + H(+) = CO2 + H2O. The enzyme catalyses urea = cyanamide + H2O. With respect to regulation, inhibited by acetazolamide. Functionally, catalyzes the reversible hydration of carbon dioxide. Can also hydrate cyanamide to urea. Involved in the regulation of fluid secretion into the anterior chamber of the eye. Essential for bone resorption and osteoclast differentiation. Contributes to intracellular pH regulation in the duodenal upper villous epithelium during proton-coupled peptide absorption. Stimulates the chloride-bicarbonate exchange activity of SLC26A6. The polypeptide is Carbonic anhydrase 2 (CA2) (Ovis aries (Sheep)).